A 240-amino-acid polypeptide reads, in one-letter code: Methylthioribulose-1-phosphate dehydratase (240 aa).

The span at 1-17 (MAQEVENNNNDHLVQSS) shows a compositional bias: polar residues. The tract at residues 1 to 20 (MAQEVENNNNDHLVQSSDPE) is disordered. Cys-100 is a binding site for substrate. Positions 117 and 119 each coordinate Zn(2+). Catalysis depends on Glu-146, which acts as the Proton donor/acceptor. His-202 contacts Zn(2+).

It belongs to the aldolase class II family. MtnB subfamily. The cofactor is Zn(2+).

It localises to the cytoplasm. It catalyses the reaction 5-(methylsulfanyl)-D-ribulose 1-phosphate = 5-methylsulfanyl-2,3-dioxopentyl phosphate + H2O. The protein operates within amino-acid biosynthesis; L-methionine biosynthesis via salvage pathway; L-methionine from S-methyl-5-thio-alpha-D-ribose 1-phosphate: step 2/6. In terms of biological role, catalyzes the dehydration of methylthioribulose-1-phosphate (MTRu-1-P) into 2,3-diketo-5-methylthiopentyl-1-phosphate (DK-MTP-1-P). The sequence is that of Methylthioribulose-1-phosphate dehydratase from Neosartorya fischeri (strain ATCC 1020 / DSM 3700 / CBS 544.65 / FGSC A1164 / JCM 1740 / NRRL 181 / WB 181) (Aspergillus fischerianus).